A 289-amino-acid chain; its full sequence is Shikimate dehydrogenase (NADP(+)) (289 aa).

Shikimate is bound by residues 19 to 21 and Thr66; that span reads SLS. Lys70 serves as the catalytic Proton acceptor. Residues Asn91 and Asp106 each coordinate shikimate. NADP(+) contacts are provided by residues 131–135 and Leu229; that span reads GNGGA. Shikimate is bound at residue Tyr231. Gly252 contributes to the NADP(+) binding site.

It belongs to the shikimate dehydrogenase family. In terms of assembly, homodimer.

It catalyses the reaction shikimate + NADP(+) = 3-dehydroshikimate + NADPH + H(+). The protein operates within metabolic intermediate biosynthesis; chorismate biosynthesis; chorismate from D-erythrose 4-phosphate and phosphoenolpyruvate: step 4/7. Involved in the biosynthesis of the chorismate, which leads to the biosynthesis of aromatic amino acids. Catalyzes the reversible NADPH linked reduction of 3-dehydroshikimate (DHSA) to yield shikimate (SA). The protein is Shikimate dehydrogenase (NADP(+)) of Nostoc sp. (strain PCC 7120 / SAG 25.82 / UTEX 2576).